A 116-amino-acid polypeptide reads, in one-letter code: Large ribosomal subunit protein eL30 (116 aa).

It belongs to the eukaryotic ribosomal protein eL30 family. As to quaternary structure, component of the large ribosomal subunit.

The protein localises to the cytoplasm. Component of the large ribosomal subunit. The ribosome is a large ribonucleoprotein complex responsible for the synthesis of proteins in the cell. This is Large ribosomal subunit protein eL30 (rpl30) from Ictalurus punctatus (Channel catfish).